The chain runs to 1180 residues: Polyamine-transporting ATPase 13A2 (1180 aa).

Topologically, residues M1–P44 are cytoplasmic. Residues W45–F65 lie within the membrane without spanning it. At R66–E235 the chain is on the cytoplasmic side. S151 carries the phosphoserine modification. Residues A236 to A253 traverse the membrane as a helical segment. The Lumenal segment spans residues D254 to Y256. The chain crosses the membrane as a helical span at residues Y257–Y276. Residues K277–K427 are Cytoplasmic-facing. A helical transmembrane segment spans residues F428–Y448. The Lumenal segment spans residues R449 to D463. Residues L464–A484 form a helical membrane-spanning segment. Residues Q485 to S930 lie on the Cytoplasmic side of the membrane. D513 serves as the catalytic 4-aspartylphosphate intermediate. 2 residues coordinate Mg(2+): D878 and D882. Residues F931–L951 form a helical membrane-spanning segment. Topologically, residues Y952 to N957 are lumenal. The helical transmembrane segment at L958–M978 threads the bilayer. The Cytoplasmic portion of the chain corresponds to S979–G994. The chain crosses the membrane as a helical span at residues A995–V1015. Over Q1016 to T1048 the chain is Lumenal. An N-linked (GlcNAc...) asparagine glycan is attached at N1033. The chain crosses the membrane as a helical span at residues V1049–A1069. Topologically, residues P1070 to P1080 are cytoplasmic. The helical transmembrane segment at F1081–L1101 threads the bilayer. Residues L1102–K1117 are Lumenal-facing. N-linked (GlcNAc...) asparagine glycosylation is present at N1110. The chain crosses the membrane as a helical span at residues L1118–L1138. The Cytoplasmic segment spans residues D1139–R1180.

Belongs to the cation transport ATPase (P-type) (TC 3.A.3) family. Type V subfamily. As to quaternary structure, interacts with MYCBP2; the interaction inhibits the ubiquitination of TSC2 by MYCBP2. Interacts with HDAC6; the interaction results in recruitment of HDAC6 to lysosomes to promote CTTN deacetylation. In terms of processing, autophosphorylated. Accumulates in an inactive autophosphorylated state and autophosphorylation is stimulated by phosphatidic acid and phosphatidylinositol 3,5-bisphosphate but not by Mn(2+) or Zn(2+). The presence of spermine results in a dose-dependent reduction in autophosphorylation. As to expression, expressed in brain; protein levels are markedly increased in brain from subjects with Parkinson disease and subjects with dementia with Lewy bodies. Detected in pyramidal neurons located throughout the cingulate cortex (at protein level). In the substantia nigra, it is found in neuromelanin-positive dopaminergic neurons (at protein level).

Its subcellular location is the lysosome membrane. It is found in the late endosome membrane. The protein resides in the endosome. The protein localises to the multivesicular body membrane. It localises to the cytoplasmic vesicle. Its subcellular location is the autophagosome membrane. It carries out the reaction spermidine(out) + ATP + H2O = spermidine(in) + ADP + phosphate + H(+). The catalysed reaction is spermine(out) + ATP + H2O = spermine(in) + ADP + phosphate + H(+). Its activity is regulated as follows. Accumulates in an inactive autophosphorylated state. The presence of spermine results in a dose-dependent reduction in autophosphorylation. ATPase which acts as a lysosomal polyamine exporter with high affinity for spermine. Also stimulates cellular uptake of polyamines and protects against polyamine toxicity. Plays a role in intracellular cation homeostasis and the maintenance of neuronal integrity. Contributes to cellular zinc homeostasis. Confers cellular protection against Mn(2+) and Zn(2+) toxicity and mitochondrial stress. Required for proper lysosomal and mitochondrial maintenance. Regulates the autophagy-lysosome pathway through the control of SYT11 expression at both transcriptional and post-translational levels. Facilitates recruitment of deacetylase HDAC6 to lysosomes to deacetylate CTTN, leading to actin polymerization, promotion of autophagosome-lysosome fusion and completion of autophagy. Promotes secretion of exosomes as well as secretion of SCNA via exosomes. Plays a role in lipid homeostasis. The polypeptide is Polyamine-transporting ATPase 13A2 (Homo sapiens (Human)).